A 363-amino-acid polypeptide reads, in one-letter code: NADH-quinone oxidoreductase subunit H (363 aa).

A run of 10 helical transmembrane segments spans residues 29–49 (VLKILMIAIPLIVSVAFYVVW), 62–82 (GPMYVGMGLFQAFADVFKLLF), 94–114 (VIFVIAPLLTLAPSFAAWAVV), 127–147 (VGLLYLLAMTSLGVYGIILAG), 166–186 (VVSYEIAMGFALVGVMIAAGS), 202–222 (FFDWFLIPLFPLFIVYWVSGV), 239–257 (IVAGHMVEYSGSVFALFFL), 264–286 (ILVSFLISIFFLGGWLSPIQGWV), 293–313 (LIDWVWNGGWPWLLLKVLFFA), and 339–359 (FIPLTIVWIAVTALMVFSGVI).

This sequence belongs to the complex I subunit 1 family. As to quaternary structure, NDH-1 is composed of 14 different subunits. Subunits NuoA, H, J, K, L, M, N constitute the membrane sector of the complex.

The protein localises to the cell inner membrane. It catalyses the reaction a quinone + NADH + 5 H(+)(in) = a quinol + NAD(+) + 4 H(+)(out). In terms of biological role, NDH-1 shuttles electrons from NADH, via FMN and iron-sulfur (Fe-S) centers, to quinones in the respiratory chain. The immediate electron acceptor for the enzyme in this species is believed to be ubiquinone. Couples the redox reaction to proton translocation (for every two electrons transferred, four hydrogen ions are translocated across the cytoplasmic membrane), and thus conserves the redox energy in a proton gradient. This subunit may bind ubiquinone. The protein is NADH-quinone oxidoreductase subunit H of Xylella fastidiosa (strain M12).